A 544-amino-acid polypeptide reads, in one-letter code: Probable protein kinase UbiB (544 aa).

In terms of domain architecture, Protein kinase spans 123–501 (DFDIEPLASA…KRQQATGKFL (379 aa)). ATP-binding positions include 129 to 137 (LASASIAQV) and lysine 152. Aspartate 287 (proton acceptor) is an active-site residue. The chain crosses the membrane as a helical span at residues 500–520 (FLFGVGATLVVCSAILVSSPY).

Belongs to the ABC1 family. UbiB subfamily.

The protein resides in the cell inner membrane. It functions in the pathway cofactor biosynthesis; ubiquinone biosynthesis [regulation]. Functionally, is probably a protein kinase regulator of UbiI activity which is involved in aerobic coenzyme Q (ubiquinone) biosynthesis. The polypeptide is Probable protein kinase UbiB (Vibrio atlanticus (strain LGP32) (Vibrio splendidus (strain Mel32))).